The sequence spans 305 residues: Olfactory receptor 4X1 (305 aa).

Residues 1–23 (MVATNNVTEIIFVGFSQNWSEQR) are Extracellular-facing. Asparagine 6 and asparagine 18 each carry an N-linked (GlcNAc...) asparagine glycan. The chain crosses the membrane as a helical span at residues 24–47 (VISVMFLLMYTAVVLGNGLIVVTI). Residues 48-55 (LASKVLTS) lie on the Cytoplasmic side of the membrane. Residues 56–77 (PMYFFLSYLSFVEICYCSVMAP) traverse the membrane as a helical segment. The Extracellular segment spans residues 78-98 (KLIFDSFIKRKVISLKGCLTQ). A disulfide bridge connects residues cysteine 95 and cysteine 187. The helical transmembrane segment at 99–118 (MFSLHFFGGTEAFLLMVMAY) threads the bilayer. The Cytoplasmic segment spans residues 119-137 (DRYVAICKPLHYMAIMNQR). The helical transmembrane segment at 138–156 (MCGLLVRIAWGGGLLHSVG) threads the bilayer. The Extracellular portion of the chain corresponds to 157–193 (QTFLIFQLPFCGPNIMDHYFCDVHPVLELACADTFFI). A helical membrane pass occupies residues 194–217 (SLLIITNGGSISVVSFFVLMASYL). At 218–233 (IILHFLRSHNLEGQHK) the chain is on the cytoplasmic side. The chain crosses the membrane as a helical span at residues 234–256 (ALSTCASHVTVVDLFFIPCSLVY). Topologically, residues 257–267 (IRPCVTLPADK) are extracellular. A helical transmembrane segment spans residues 268-287 (IVAVFYTVVTPLLNPVIYSF). Over 288 to 305 (RNAEVKNAMRRFIGGKVI) the chain is Cytoplasmic.

The protein belongs to the G-protein coupled receptor 1 family.

It localises to the cell membrane. Odorant receptor. This Homo sapiens (Human) protein is Olfactory receptor 4X1 (OR4X1).